The sequence spans 147 residues: uncharacterized protein (147 aa).

At Met1–Lys16 the chain is on the extracellular side. Residues Val17 to Ile37 form a helical membrane-spanning segment. Over Thr38–Asn105 the chain is Cytoplasmic. The chain crosses the membrane as a helical span at residues Glu106–Ser126. Residues Glu127–Asn147 are Extracellular-facing.

It localises to the membrane. This is an uncharacterized protein from Saccharomyces cerevisiae (strain ATCC 204508 / S288c) (Baker's yeast).